Here is a 341-residue protein sequence, read N- to C-terminus: Ketol-acid reductoisomerase (NADP(+)) (341 aa).

A KARI N-terminal Rossmann domain is found at 2–181; that stretch reads AKVYYNGDAN…GAARAGVLET (180 aa). Residues 25–28, Arg-48, Ser-52, and 82–85 contribute to the NADP(+) site; these read YGSQ and DEKQ. His-107 is an active-site residue. Gly-133 lines the NADP(+) pocket. The 146-residue stretch at 182–327 folds into the KARI C-terminal knotted domain; that stretch reads TFKEETETDL…RELRSMMPFV (146 aa). Positions 190, 194, 226, and 230 each coordinate Mg(2+). Ser-251 serves as a coordination point for substrate.

It belongs to the ketol-acid reductoisomerase family. Requires Mg(2+) as cofactor.

The enzyme catalyses (2R)-2,3-dihydroxy-3-methylbutanoate + NADP(+) = (2S)-2-acetolactate + NADPH + H(+). It catalyses the reaction (2R,3R)-2,3-dihydroxy-3-methylpentanoate + NADP(+) = (S)-2-ethyl-2-hydroxy-3-oxobutanoate + NADPH + H(+). It functions in the pathway amino-acid biosynthesis; L-isoleucine biosynthesis; L-isoleucine from 2-oxobutanoate: step 2/4. Its pathway is amino-acid biosynthesis; L-valine biosynthesis; L-valine from pyruvate: step 2/4. Functionally, involved in the biosynthesis of branched-chain amino acids (BCAA). Catalyzes an alkyl-migration followed by a ketol-acid reduction of (S)-2-acetolactate (S2AL) to yield (R)-2,3-dihydroxy-isovalerate. In the isomerase reaction, S2AL is rearranged via a Mg-dependent methyl migration to produce 3-hydroxy-3-methyl-2-ketobutyrate (HMKB). In the reductase reaction, this 2-ketoacid undergoes a metal-dependent reduction by NADPH to yield (R)-2,3-dihydroxy-isovalerate. In Geobacillus thermodenitrificans (strain NG80-2), this protein is Ketol-acid reductoisomerase (NADP(+)).